Consider the following 285-residue polypeptide: Putative pyruvate, phosphate dikinase regulatory protein (285 aa).

165 to 172 is an ADP binding site; the sequence is GVSRTSKT.

Belongs to the pyruvate, phosphate/water dikinase regulatory protein family. PDRP subfamily.

It carries out the reaction N(tele)-phospho-L-histidyl/L-threonyl-[pyruvate, phosphate dikinase] + ADP = N(tele)-phospho-L-histidyl/O-phospho-L-threonyl-[pyruvate, phosphate dikinase] + AMP + H(+). The enzyme catalyses N(tele)-phospho-L-histidyl/O-phospho-L-threonyl-[pyruvate, phosphate dikinase] + phosphate + H(+) = N(tele)-phospho-L-histidyl/L-threonyl-[pyruvate, phosphate dikinase] + diphosphate. Bifunctional serine/threonine kinase and phosphorylase involved in the regulation of the pyruvate, phosphate dikinase (PPDK) by catalyzing its phosphorylation/dephosphorylation. This Lactobacillus delbrueckii subsp. bulgaricus (strain ATCC 11842 / DSM 20081 / BCRC 10696 / JCM 1002 / NBRC 13953 / NCIMB 11778 / NCTC 12712 / WDCM 00102 / Lb 14) protein is Putative pyruvate, phosphate dikinase regulatory protein.